A 190-amino-acid polypeptide reads, in one-letter code: Pyridoxal 5'-phosphate synthase subunit PdxT (190 aa).

Position 46 to 48 (46 to 48) interacts with L-glutamine; sequence GES. Catalysis depends on Cys78, which acts as the Nucleophile. L-glutamine contacts are provided by residues Arg108 and 137–138; that span reads IR. Residues His174 and Glu176 each act as charge relay system in the active site.

This sequence belongs to the glutaminase PdxT/SNO family. In terms of assembly, in the presence of PdxS, forms a dodecamer of heterodimers. Only shows activity in the heterodimer.

The enzyme catalyses aldehydo-D-ribose 5-phosphate + D-glyceraldehyde 3-phosphate + L-glutamine = pyridoxal 5'-phosphate + L-glutamate + phosphate + 3 H2O + H(+). It catalyses the reaction L-glutamine + H2O = L-glutamate + NH4(+). The protein operates within cofactor biosynthesis; pyridoxal 5'-phosphate biosynthesis. Catalyzes the hydrolysis of glutamine to glutamate and ammonia as part of the biosynthesis of pyridoxal 5'-phosphate. The resulting ammonia molecule is channeled to the active site of PdxS. This is Pyridoxal 5'-phosphate synthase subunit PdxT from Chloroflexus aurantiacus (strain ATCC 29366 / DSM 635 / J-10-fl).